The sequence spans 280 residues: Putative high affinity immunoglobulin gamma Fc receptor IB (280 aa).

An N-terminal signal peptide occupies residues 1–15 (MWFLTTLLLWVPVDG). Topologically, residues 16-198 (QVDTTKAVIT…LQLPTPVWFH (183 aa)) are extracellular. 2 Ig-like C2-type domains span residues 22–101 (AVIT…LEIH) and 95–184 (PIQL…ISQY). Cystine bridges form between Cys43-Cys85 and Cys124-Cys168. Residues Asn59, Asn152, and Asn163 are each glycosylated (N-linked (GlcNAc...) asparagine). Residues 199 to 219 (VLFYLAVGIMFLVNTVLWVTI) traverse the membrane as a helical segment. Topologically, residues 220–280 (RKELKRKKKW…VHRKEPQGAT (61 aa)) are cytoplasmic. Positions 258-280 (KCQEQKEEQLQEGVHRKEPQGAT) are disordered.

Belongs to the immunoglobulin superfamily. FCGR1 family.

The protein resides in the cell membrane. May bind to the Fc region of immunoglobulins gamma with a low affinity compared to FCGR1A. May function in the humoral immune response. This chain is Putative high affinity immunoglobulin gamma Fc receptor IB, found in Homo sapiens (Human).